A 187-amino-acid chain; its full sequence is Lipid A acyltransferase PagP (187 aa).

A signal peptide spans 1–26 (MIVAKKYFLVLSFLFVQFALLPQAFS). Residues H59, D102, and S103 contribute to the active site.

It belongs to the lipid A palmitoyltransferase family. Homodimer.

The protein localises to the cell outer membrane. The enzyme catalyses a lipid A + a 1,2-diacyl-sn-glycero-3-phosphocholine = a hepta-acyl lipid A + a 2-acyl-sn-glycero-3-phosphocholine. It catalyses the reaction a lipid IVA + a 1,2-diacyl-sn-glycero-3-phosphocholine = a lipid IVB + a 2-acyl-sn-glycero-3-phosphocholine. It carries out the reaction a lipid IIA + a 1,2-diacyl-sn-glycero-3-phosphocholine = a lipid IIB + a 2-acyl-sn-glycero-3-phosphocholine. Its function is as follows. Transfers a fatty acid residue from the sn-1 position of a phospholipid to the N-linked hydroxyfatty acid chain on the proximal unit of lipid A or its precursors. This chain is Lipid A acyltransferase PagP, found in Citrobacter koseri (strain ATCC BAA-895 / CDC 4225-83 / SGSC4696).